The sequence spans 701 residues: Long chain acyl-CoA synthetase 6, peroxisomal (701 aa).

Positions 1–38 are cleaved as a propeptide — removed in mature form; that stretch reads MDSSSSSSSAAARRRINAIHSHLVTSSRSSPLLRSNPT. Residues 15 to 23 carry the Microbody targeting signal motif; it reads RINAIHSHL. Residue 266-277 coordinates ATP; that stretch reads ICYTSGTTGTPK. A fatty acid-binding region spans residues 526–550; sequence DGWLHTGDIGLWLPGGRLKIIDRKK.

Belongs to the ATP-dependent AMP-binding enzyme family. Requires Mg(2+) as cofactor. In terms of tissue distribution, expressed in roots, stems, leaves flowers and germinating seedling. Preferentially expressed in seeds and senescent leaves.

It is found in the peroxisome. It localises to the glyoxysome membrane. It carries out the reaction a long-chain fatty acid + ATP + CoA = a long-chain fatty acyl-CoA + AMP + diphosphate. The catalysed reaction is tetradecanoate + ATP + CoA = tetradecanoyl-CoA + AMP + diphosphate. It catalyses the reaction hexadecanoate + ATP + CoA = hexadecanoyl-CoA + AMP + diphosphate. The enzyme catalyses (9Z)-octadecenoate + ATP + CoA = (9Z)-octadecenoyl-CoA + AMP + diphosphate. It carries out the reaction (9Z,12Z)-octadecadienoate + ATP + CoA = (9Z,12Z)-octadecadienoyl-CoA + AMP + diphosphate. The catalysed reaction is (9Z,12Z,15Z)-octadecatrienoate + ATP + CoA = (9Z,12Z,15Z)-octadecatrienoyl-CoA + AMP + diphosphate. Its pathway is lipid metabolism; fatty acid metabolism. In terms of biological role, activation of long-chain fatty acids for both synthesis of cellular lipids, and degradation via beta-oxidation. Preferentially uses palmitate, palmitoleate, oleate, linoleate and eicosenoate as substrates. Can use myristate and linolenate as substrates. May play a regulatory role both in fatty acid import into glyoxysomes and in fatty acid beta-oxidation. Functions redundantly with LACS7 in lipid mobilization for beta-oxidation during seed germination, which is essential for postgerminative growth and seedling establishment. This chain is Long chain acyl-CoA synthetase 6, peroxisomal, found in Arabidopsis thaliana (Mouse-ear cress).